The primary structure comprises 273 residues: Aspartate/glutamate leucyltransferase (273 aa).

It belongs to the R-transferase family. Bpt subfamily.

It localises to the cytoplasm. It carries out the reaction N-terminal L-glutamyl-[protein] + L-leucyl-tRNA(Leu) = N-terminal L-leucyl-L-glutamyl-[protein] + tRNA(Leu) + H(+). The enzyme catalyses N-terminal L-aspartyl-[protein] + L-leucyl-tRNA(Leu) = N-terminal L-leucyl-L-aspartyl-[protein] + tRNA(Leu) + H(+). Functions in the N-end rule pathway of protein degradation where it conjugates Leu from its aminoacyl-tRNA to the N-termini of proteins containing an N-terminal aspartate or glutamate. This is Aspartate/glutamate leucyltransferase from Ruegeria pomeroyi (strain ATCC 700808 / DSM 15171 / DSS-3) (Silicibacter pomeroyi).